The following is a 511-amino-acid chain: Transcription factor bHLH28 (511 aa).

Residues 339-388 (DKPLNHVEAERMRREKLNHRFYALRAVVPNVSKMDKTSLLEDAVCYINEL) form the bHLH domain.

As to quaternary structure, homodimer.

It is found in the nucleus. This Arabidopsis thaliana (Mouse-ear cress) protein is Transcription factor bHLH28 (BHLH28).